Consider the following 301-residue polypeptide: Probable aspartoacylase (301 aa).

Residues H13 and E16 each contribute to the Zn(2+) site. Residues R54 and 61-62 contribute to the substrate site; that span reads NR. H105 provides a ligand contact to Zn(2+). E163 and Y273 together coordinate substrate.

Belongs to the AspA/AstE family. Aspartoacylase subfamily. Zn(2+) is required as a cofactor.

It catalyses the reaction an N-acyl-L-aspartate + H2O = a carboxylate + L-aspartate. In Prochlorococcus marinus (strain AS9601), this protein is Probable aspartoacylase.